Here is a 147-residue protein sequence, read N- to C-terminus: uncharacterized protein (147 aa).

The chain crosses the membrane as a helical span at residues 13-35; the sequence is NSRINLLGILVLNVVCGKSSIFF.

The protein resides in the membrane. This is an uncharacterized protein from Saccharomyces cerevisiae (strain ATCC 204508 / S288c) (Baker's yeast).